Consider the following 244-residue polypeptide: Gamma-gliadin (244 aa).

A disordered region spans residues 18–64; sequence QQPFLQQPQQPSPQPQQVVQIISPATPTTIPSAGKPTSAPFPQQQQQ. The segment covering 35–48 has biased composition (polar residues); that stretch reads VVQIISPATPTTIP.

Belongs to the gliadin/glutenin family.

Its function is as follows. Gliadin is the major seed storage protein in wheat. The protein is Gamma-gliadin of Triticum aestivum (Wheat).